The sequence spans 100 residues: Protein SAMBA (100 aa).

Residues 1 to 40 (MNGASPAHSLVSTTAVAGGGGSSGAAAGLDDFHFPPDIPS) are disordered.

Interacts with CDC27B and CYCA2-3. Expressed in embryos, germinating seeds, hypocotyls and pollen grains.

Plays an important role in organ size control. Acts as negative regulator of the anaphase-promoting complex/cyclosome (APC/C). Regulates cell proliferation during early development by targeting CYCA2-3 for APC/C-mediated degradation. Required for mitosis I during pollen microspore development. This chain is Protein SAMBA, found in Arabidopsis thaliana (Mouse-ear cress).